Here is a 122-residue protein sequence, read N- to C-terminus: Large ribosomal subunit protein uL14 (122 aa).

The protein belongs to the universal ribosomal protein uL14 family. Part of the 50S ribosomal subunit. Forms a cluster with proteins L3 and L19. In the 70S ribosome, L14 and L19 interact and together make contacts with the 16S rRNA in bridges B5 and B8.

Functionally, binds to 23S rRNA. Forms part of two intersubunit bridges in the 70S ribosome. This Rippkaea orientalis (strain PCC 8801 / RF-1) (Cyanothece sp. (strain PCC 8801)) protein is Large ribosomal subunit protein uL14.